The sequence spans 125 residues: Small ribosomal subunit protein uS13 (125 aa).

This sequence belongs to the universal ribosomal protein uS13 family. Part of the 30S ribosomal subunit. Forms a loose heterodimer with protein S19. Forms two bridges to the 50S subunit in the 70S ribosome.

Functionally, located at the top of the head of the 30S subunit, it contacts several helices of the 16S rRNA. In the 70S ribosome it contacts the 23S rRNA (bridge B1a) and protein L5 of the 50S subunit (bridge B1b), connecting the 2 subunits; these bridges are implicated in subunit movement. Contacts the tRNAs in the A and P-sites. The polypeptide is Small ribosomal subunit protein uS13 (Rickettsia typhi (strain ATCC VR-144 / Wilmington)).